Reading from the N-terminus, the 2142-residue chain is U5 small nuclear ribonucleoprotein 200 kDa helicase (2142 aa).

Disordered stretches follow at residues methionine 52 to arginine 74, glutamate 211 to glycine 234, and arginine 366 to alanine 396. The segment covering aspartate 369 to alanine 391 has biased composition (basic and acidic residues). Residues lysine 490–leucine 673 form the Helicase ATP-binding 1 domain. Residue alanine 503–threonine 510 coordinates ATP. The DEIH box signature appears at aspartate 615–histidine 618. The Helicase C-terminal 1 domain maps to serine 684–valine 917. The SEC63 1 domain maps to valine 981 to phenylalanine 1286. Residues asparagine 1337–phenylalanine 1511 form the Helicase ATP-binding 2 domain. Position 1350–1357 (alanine 1350–methionine 1357) interacts with ATP. Residues aspartate 1453–glutamine 1456 carry the DELQ box motif. The Helicase C-terminal 2 domain occupies proline 1544–aspartate 1752. An SEC63 2 domain is found at proline 1811–isoleucine 2128.

Belongs to the helicase family. SKI2 subfamily.

The protein resides in the nucleus. It carries out the reaction ATP + H2O = ADP + phosphate + H(+). Its function is as follows. Catalyzes the ATP-dependent unwinding of U4/U6 RNA duplices, an essential step in the assembly of a catalytically active spliceosome. Plays a role in pre-mRNA splicing. This Drosophila melanogaster (Fruit fly) protein is U5 small nuclear ribonucleoprotein 200 kDa helicase.